The following is a 414-amino-acid chain: Transforming growth factor beta-2 proprotein (414 aa).

An N-terminal signal peptide occupies residues 1–20 (MHYCVLSTFLLLHLVPVALS). Asn-72, Asn-140, and Asn-241 each carry an N-linked (GlcNAc...) asparagine glycan. 4 disulfides stabilise this stretch: Cys-309/Cys-318, Cys-317/Cys-380, Cys-346/Cys-411, and Cys-350/Cys-413.

The protein belongs to the TGF-beta family. Interacts with the serine proteases, HTRA1 and HTRA3. Interacts with ASPN. Interacts with MFAP5. As to quaternary structure, interacts with Transforming growth factor beta-2 (TGF-beta-2) chain; interaction is non-covalent and maintains (TGF-beta-2) in a latent state. Interacts with LRRC32/GARP; leading to regulate activation of TGF-beta-2. Interacts with NREP; the interaction results in a decrease in TGFB2 autoinduction. In terms of assembly, transforming growth factor beta-2: Homodimer; disulfide-linked. Transforming growth factor beta-2: Interacts with TGF-beta receptors (TGFBR1 and TGFBR2), leading to signal transduction. Post-translationally, the precursor proprotein is cleaved in the Golgi apparatus to form Transforming growth factor beta-2 (TGF-beta-2) and Latency-associated peptide (LAP) chains, which remain non-covalently linked, rendering TGF-beta-2 inactive.

It localises to the secreted. It is found in the extracellular space. Its subcellular location is the extracellular matrix. Functionally, precursor of the Latency-associated peptide (LAP) and Transforming growth factor beta-2 (TGF-beta-2) chains, which constitute the regulatory and active subunit of TGF-beta-2, respectively. In terms of biological role, required to maintain the Transforming growth factor beta-2 (TGF-beta-2) chain in a latent state during storage in extracellular matrix. Associates non-covalently with TGF-beta-2 and regulates its activation via interaction with 'milieu molecules', such as LTBP1 and LRRC32/GARP, that control activation of TGF-beta-2. Its function is as follows. Multifunctional protein that regulates various processes such as angiogenesis and heart development. Activation into mature form follows different steps: following cleavage of the proprotein in the Golgi apparatus, Latency-associated peptide (LAP) and Transforming growth factor beta-2 (TGF-beta-2) chains remain non-covalently linked rendering TGF-beta-2 inactive during storage in extracellular matrix. At the same time, LAP chain interacts with 'milieu molecules', such as LTBP1 and LRRC32/GARP, that control activation of TGF-beta-2 and maintain it in a latent state during storage in extracellular milieus. Once activated following release of LAP, TGF-beta-2 acts by binding to TGF-beta receptors (TGFBR1 and TGFBR2), which transduce signal. The protein is Transforming growth factor beta-2 proprotein (Tgfb2) of Mus musculus (Mouse).